Consider the following 627-residue polypeptide: Putative ankyrin repeat protein L122 (627 aa).

12 ANK repeats span residues 61-94 (KGWT…DVHI), 98-130 (KGRT…DINS), 153-186 (HACY…DPNI), 190-223 (YGKT…NANH), 228-259 (AETV…DINH), 263-296 (IGFT…NINL), 300-333 (DGFT…DIND), 337-370 (NNVT…DLEI), 374-407 (YDWT…NVNV), 411-444 (LGHT…NPNL), 448-480 (DKNT…DSNT), and 491-523 (REYN…NYSD).

This chain is Putative ankyrin repeat protein L122, found in Acanthamoeba polyphaga (Amoeba).